A 316-amino-acid polypeptide reads, in one-letter code: Transaldolase (316 aa).

The active-site Schiff-base intermediate with substrate is K131.

Belongs to the transaldolase family. Type 1 subfamily. Homodimer.

The protein resides in the cytoplasm. The enzyme catalyses D-sedoheptulose 7-phosphate + D-glyceraldehyde 3-phosphate = D-erythrose 4-phosphate + beta-D-fructose 6-phosphate. It participates in carbohydrate degradation; pentose phosphate pathway; D-glyceraldehyde 3-phosphate and beta-D-fructose 6-phosphate from D-ribose 5-phosphate and D-xylulose 5-phosphate (non-oxidative stage): step 2/3. Its function is as follows. Transaldolase is important for the balance of metabolites in the pentose-phosphate pathway. This is Transaldolase from Sodalis glossinidius (strain morsitans).